The sequence spans 282 residues: MRNKLSFDLQLSARKAAIAERIAAHKIARSKVSVFLMAMSAGVFMAIGFTFYLSVIADAPSSQALTHLVGGLCFTLGFILLAVCGTSLFTSSVMTVMAKSRGVISWRTWLINALLVACGNLAGIACFSLLIWFSGLVMSENAMWGVAVLHCAEGKMHHTFTESVSLGIMCNLMVCLALWMSYCGRSLCDKIVAMILPITLFVASGFEHCIANLFVIPFAIAIRHFAPPPFWQLAHSSADNFPALTVSHFITANLLPVMLGNIIGGAVLVSMCYRAIYLRQEP.

The Cytoplasmic portion of the chain corresponds to 1-35 (MRNKLSFDLQLSARKAAIAERIAAHKIARSKVSVF). A helical transmembrane segment spans residues 36 to 56 (LMAMSAGVFMAIGFTFYLSVI). The Periplasmic portion of the chain corresponds to 57–68 (ADAPSSQALTHL). Residues 69–89 (VGGLCFTLGFILLAVCGTSLF) form a helical membrane-spanning segment. Over 90 to 112 (TSSVMTVMAKSRGVISWRTWLIN) the chain is Cytoplasmic. Residues 113–133 (ALLVACGNLAGIACFSLLIWF) form a helical membrane-spanning segment. The Periplasmic portion of the chain corresponds to 134-163 (SGLVMSENAMWGVAVLHCAEGKMHHTFTES). A helical transmembrane segment spans residues 164–184 (VSLGIMCNLMVCLALWMSYCG). Over 185-190 (RSLCDK) the chain is Cytoplasmic. The chain crosses the membrane as a helical span at residues 191–211 (IVAMILPITLFVASGFEHCIA). The Periplasmic segment spans residues 212–248 (NLFVIPFAIAIRHFAPPPFWQLAHSSADNFPALTVSH). Residues 249–269 (FITANLLPVMLGNIIGGAVLV) traverse the membrane as a helical segment. Topologically, residues 270 to 282 (SMCYRAIYLRQEP) are cytoplasmic.

The protein belongs to the FNT transporter (TC 1.A.16) family.

Its subcellular location is the cell inner membrane. It catalyses the reaction formate(in) = formate(out). The direction of formate translocation depends on external pH and electron donor source. Its function is as follows. Involved in the bidirectional transport of formate during mixed-acid fermentation. This Escherichia coli (strain K12) protein is Formate channel FocB.